The following is a 156-amino-acid chain: Small ribosomal subunit protein uS7 (156 aa).

Belongs to the universal ribosomal protein uS7 family. In terms of assembly, part of the 30S ribosomal subunit. Contacts proteins S9 and S11.

One of the primary rRNA binding proteins, it binds directly to 16S rRNA where it nucleates assembly of the head domain of the 30S subunit. Is located at the subunit interface close to the decoding center, probably blocks exit of the E-site tRNA. The sequence is that of Small ribosomal subunit protein uS7 from Acidithiobacillus ferrooxidans (strain ATCC 53993 / BNL-5-31) (Leptospirillum ferrooxidans (ATCC 53993)).